Consider the following 686-residue polypeptide: Secretin GspD 2 (686 aa).

Residues 1–40 (MFWRDITLSVWRKKTTGLKTKKRLLPLVLAAALCSSPVWA) form the signal peptide. The segment at 41–140 (EEATFTANFK…VGEGSDNYAG (100 aa)) is N0, contacts GspC2. An N1 region spans residues 142–206 (EMVTKVVPVR…EVIQRVDHAG (65 aa)). The N2 stretch occupies residues 207–279 (NRTEEVIPLD…LIRRLDSEME (73 aa)). Residues 282 to 357 (GNSQVFYLKY…SLQSVIEQLD (76 aa)) form an N3 region. Residues 360–627 (RAQVHVEALI…VFIRPTILRD (268 aa)) are secretin. A cap gate region spans residues 414–433 (PQKGSTVISENGATTINPDT). A s domain, contacts AspS2 region spans residues 629–686 (MAADGVSQRKYNYMRAEQIYRDEQGLSLMPHTAQPVLPAQNQALPPEVRAFLNAGRTR).

The protein belongs to the bacterial secretin family. GSP D subfamily. Forms a cylindrical channel with 15 subunits, each of which interacts with the surrounding pilotin AspS2 proteins (also called GspS-beta). Interacts with inner cell membrane protein GspC2 in the periplasm. Forms multimers in the outer membrane. The isolated N0 domain forms dimers that self-assemble into rings.

The protein localises to the cell outer membrane. In terms of biological role, part of a type II secretion system (T2SS, formerly general secretion pathway, GSP) for the export of folded proteins across the outer membrane. This subunit forms the outer membrane channel. The sequence is that of Secretin GspD 2 (gspD2) from Escherichia coli O78:H11 (strain H10407 / ETEC).